A 205-amino-acid chain; its full sequence is Golgi to ER traffic protein 1 (205 aa).

Residues 1–3 lie on the Lumenal side of the membrane; sequence MDY. Residues 4-24 traverse the membrane as a helical segment; sequence WILLVLAFLVADKSWHLTGLL. Residues 25-96 lie on the Cytoplasmic side of the membrane; the sequence is ATKLTSPERL…ATKARLAKLK (72 aa). Residues 32–96 are a coiled coil; it reads ERLQQLIRER…ATKARLAKLK (65 aa). Residues 97–117 traverse the membrane as a helical segment; that stretch reads LLVVTVPFTALKFYKGKLPVY. The Lumenal segment spans residues 118-156; that stretch reads ALPKGMFPRFIEGTLEHGWLYMALAPLNMKQFSEGASVA. The chain crosses the membrane as a helical span at residues 157-173; sequence VSLGIWLFALLRVLGAI. Topologically, residues 174–205 are cytoplasmic; that stretch reads EFVLETLREQNPQVATETAKVHARTAQAASAN.

Belongs to the WRB/GET1 family. Component of the Golgi to ER traffic (GET) complex, which is composed of GET1, GET2 and GET3. Within the complex, GET1 and GET2 form a heterotetramer which is stabilized by phosphatidylinositol binding and which binds to the GET3 homodimer.

It localises to the endoplasmic reticulum membrane. Its subcellular location is the golgi apparatus membrane. In terms of biological role, required for the post-translational delivery of tail-anchored (TA) proteins to the endoplasmic reticulum. Together with GET2, acts as a membrane receptor for soluble GET3, which recognizes and selectively binds the transmembrane domain of TA proteins in the cytosol. The GET complex cooperates with the HDEL receptor ERD2 to mediate the ATP-dependent retrieval of resident ER proteins that contain a C-terminal H-D-E-L retention signal from the Golgi to the ER. This is Golgi to ER traffic protein 1 from Eremothecium gossypii (strain ATCC 10895 / CBS 109.51 / FGSC 9923 / NRRL Y-1056) (Yeast).